Here is a 43-residue protein sequence, read N- to C-terminus: Protein PsbN (43 aa).

The helical transmembrane segment at 7 to 27 (LIIFIASLLLGLTGYSIYTAF) threads the bilayer.

Belongs to the PsbN family.

It is found in the plastid. Its subcellular location is the chloroplast thylakoid membrane. May play a role in photosystem I and II biogenesis. This is Protein PsbN from Guillardia theta (Cryptophyte).